Here is a 164-residue protein sequence, read N- to C-terminus: Crossover junction endodeoxyribonuclease RuvC (164 aa).

Active-site residues include aspartate 7, glutamate 67, and aspartate 140. Residues aspartate 7, glutamate 67, and aspartate 140 each coordinate Mg(2+).

It belongs to the RuvC family. Homodimer which binds Holliday junction (HJ) DNA. The HJ becomes 2-fold symmetrical on binding to RuvC with unstacked arms; it has a different conformation from HJ DNA in complex with RuvA. In the full resolvosome a probable DNA-RuvA(4)-RuvB(12)-RuvC(2) complex forms which resolves the HJ. It depends on Mg(2+) as a cofactor.

The protein resides in the cytoplasm. It carries out the reaction Endonucleolytic cleavage at a junction such as a reciprocal single-stranded crossover between two homologous DNA duplexes (Holliday junction).. The RuvA-RuvB-RuvC complex processes Holliday junction (HJ) DNA during genetic recombination and DNA repair. Endonuclease that resolves HJ intermediates. Cleaves cruciform DNA by making single-stranded nicks across the HJ at symmetrical positions within the homologous arms, yielding a 5'-phosphate and a 3'-hydroxyl group; requires a central core of homology in the junction. The consensus cleavage sequence is 5'-(A/T)TT(C/G)-3'. Cleavage occurs on the 3'-side of the TT dinucleotide at the point of strand exchange. HJ branch migration catalyzed by RuvA-RuvB allows RuvC to scan DNA until it finds its consensus sequence, where it cleaves and resolves the cruciform DNA. This Alkaliphilus metalliredigens (strain QYMF) protein is Crossover junction endodeoxyribonuclease RuvC.